The primary structure comprises 187 residues: Adenylate kinase (187 aa).

An ATP-binding site is contributed by Gly-10–Thr-15. Residues Ser-30 to Val-59 form an NMP region. Residues Thr-31, Arg-36, Asp-57 to Val-59, Gly-85 to Arg-88, and Gln-92 contribute to the AMP site. An LID region spans residues Gly-126–Asp-136. Arg-127 serves as a coordination point for ATP. AMP-binding residues include Arg-133 and Arg-144. Residue Gly-172 coordinates ATP.

It belongs to the adenylate kinase family. In terms of assembly, monomer.

The protein resides in the cytoplasm. The enzyme catalyses AMP + ATP = 2 ADP. The protein operates within purine metabolism; AMP biosynthesis via salvage pathway; AMP from ADP: step 1/1. Catalyzes the reversible transfer of the terminal phosphate group between ATP and AMP. Plays an important role in cellular energy homeostasis and in adenine nucleotide metabolism. In Xylella fastidiosa (strain M12), this protein is Adenylate kinase.